The following is a 180-amino-acid chain: Putative 5'(3')-deoxyribonucleotidase (180 aa).

Catalysis depends on D9, which acts as the Nucleophile. Positions 9, 11, and 135 each coordinate Mg(2+). The active-site Proton donor is D11.

The protein belongs to the 5'(3')-deoxyribonucleotidase family. It depends on Mg(2+) as a cofactor.

Its function is as follows. Dephosphorylates the 5' and 2'(3')-phosphates of deoxyribonucleotides. This is Putative 5'(3')-deoxyribonucleotidase from Staphylococcus aureus (strain MSSA476).